We begin with the raw amino-acid sequence, 684 residues long: Glycine--tRNA ligase beta subunit (684 aa).

Belongs to the class-II aminoacyl-tRNA synthetase family. As to quaternary structure, tetramer of two alpha and two beta subunits.

It localises to the cytoplasm. The catalysed reaction is tRNA(Gly) + glycine + ATP = glycyl-tRNA(Gly) + AMP + diphosphate. This is Glycine--tRNA ligase beta subunit from Pseudomonas aeruginosa (strain UCBPP-PA14).